The primary structure comprises 255 residues: Octanoyltransferase (255 aa).

The BPL/LPL catalytic domain occupies 54-238 (GDANELVWLL…SFTTIFGATV (185 aa)). Residues 92 to 99 (RGGQLTYH), 167 to 169 (AIG), and 180 to 182 (GIA) each bind substrate. Cys198 functions as the Acyl-thioester intermediate in the catalytic mechanism.

The protein belongs to the LipB family.

The protein resides in the cytoplasm. It carries out the reaction octanoyl-[ACP] + L-lysyl-[protein] = N(6)-octanoyl-L-lysyl-[protein] + holo-[ACP] + H(+). It participates in protein modification; protein lipoylation via endogenous pathway; protein N(6)-(lipoyl)lysine from octanoyl-[acyl-carrier-protein]: step 1/2. Catalyzes the transfer of endogenously produced octanoic acid from octanoyl-acyl-carrier-protein onto the lipoyl domains of lipoate-dependent enzymes. Lipoyl-ACP can also act as a substrate although octanoyl-ACP is likely to be the physiological substrate. The chain is Octanoyltransferase from Rhodopseudomonas palustris (strain BisB5).